Here is a 151-residue protein sequence, read N- to C-terminus: UPF0208 membrane protein SG1605 (151 aa).

Transmembrane regions (helical) follow at residues 46-64 (FGVR…WQIA) and 70-90 (GPAV…LWWL).

This sequence belongs to the UPF0208 family.

It localises to the cell inner membrane. This chain is UPF0208 membrane protein SG1605, found in Sodalis glossinidius (strain morsitans).